Reading from the N-terminus, the 658-residue chain is Endoglucanase 3 (658 aa).

A signal peptide spans 1 to 23 (MQLKNFYPKMSVLGIATVMALTA). Cys-24 is lipidated: N-palmitoyl cysteine. The S-diacylglycerol cysteine moiety is linked to residue Cys-24. Residues 24–265 (CGDENTQALF…TDSLFIDNIY (242 aa)) constitute a propeptide that is removed on maturation. The interval 42 to 83 (ENQVPVSSSDMSPTSSDAVIDPTSSSAAVVDPSTLPAEGPIT) is disordered. Residues 45–58 (VPVSSSDMSPTSSD) show a composition bias toward low complexity. A CBM11 domain is found at 87 to 277 (GLGTLVDDFE…DSSEVEKDQP (191 aa)). Glu-448 acts as the Proton donor in catalysis. Residue Glu-597 is the Nucleophile of the active site.

The protein belongs to the glycosyl hydrolase 5 (cellulase A) family. Monomer. Post-translationally, may be a lipoprotein and may be glycosylated.

Its subcellular location is the membrane. The catalysed reaction is Endohydrolysis of (1-&gt;4)-beta-D-glucosidic linkages in cellulose, lichenin and cereal beta-D-glucans.. Its function is as follows. Exhibits both endoglucanase and cellobiosidase activities. The polypeptide is Endoglucanase 3 (cel-3) (Fibrobacter succinogenes (strain ATCC 19169 / S85)).